The chain runs to 127 residues: Large ribosomal subunit protein bL17 (127 aa).

The protein belongs to the bacterial ribosomal protein bL17 family. Part of the 50S ribosomal subunit. Contacts protein L32.

This Fervidobacterium nodosum (strain ATCC 35602 / DSM 5306 / Rt17-B1) protein is Large ribosomal subunit protein bL17.